Here is a 211-residue protein sequence, read N- to C-terminus: Orotidine 5'-phosphate decarboxylase (211 aa).

Substrate is bound by residues aspartate 7, lysine 29, 57 to 66 (DLKLADIPNT), serine 109, 162 to 172 (PGIGAQGGSPV), glycine 185, and arginine 186. Residue lysine 59 is the Proton donor of the active site.

This sequence belongs to the OMP decarboxylase family. Type 1 subfamily. Homodimer.

It catalyses the reaction orotidine 5'-phosphate + H(+) = UMP + CO2. The protein operates within pyrimidine metabolism; UMP biosynthesis via de novo pathway; UMP from orotate: step 2/2. Catalyzes the decarboxylation of orotidine 5'-monophosphate (OMP) to uridine 5'-monophosphate (UMP). This chain is Orotidine 5'-phosphate decarboxylase, found in Pyrococcus furiosus (strain ATCC 43587 / DSM 3638 / JCM 8422 / Vc1).